The sequence spans 130 residues: Cystatin (130 aa).

Residues 1–19 form the signal peptide; sequence MEWKIVVPLLAVAFTVANA. Residues 67–71 carry the Secondary area of contact motif; the sequence is QVVSG. 2 cysteine pairs are disulfide-bonded: cysteine 85–cysteine 94 and cysteine 108–cysteine 128.

The protein belongs to the cystatin family. As to expression, ubiquitous expression including brain, white muscle, heart, gill, kidney, spleen, liver and skin with the highest and lowest level in brain and gill, respectively.

Its subcellular location is the secreted. Its function is as follows. Cysteine proteinase inhibitor. The chain is Cystatin from Oncorhynchus keta (Chum salmon).